Consider the following 447-residue polypeptide: Tubulin beta-1 chain (447 aa).

Positions 11, 69, 138, 142, 143, 144, 204, and 226 each coordinate GTP. Residue E69 coordinates Mg(2+). Residues 411 to 427 (AESNMNDLVSEYQQYQD) are compositionally biased toward polar residues. The disordered stretch occupies residues 411–447 (AESNMNDLVSEYQQYQDATADEEGDYEDEEEQVPEDE). Acidic residues predominate over residues 429 to 447 (TADEEGDYEDEEEQVPEDE).

It belongs to the tubulin family. In terms of assembly, dimer of alpha and beta chains. A typical microtubule is a hollow water-filled tube with an outer diameter of 25 nm and an inner diameter of 15 nM. Alpha-beta heterodimers associate head-to-tail to form protofilaments running lengthwise along the microtubule wall with the beta-tubulin subunit facing the microtubule plus end conferring a structural polarity. Microtubules usually have 13 protofilaments but different protofilament numbers can be found in some organisms and specialized cells. Mg(2+) is required as a cofactor. In terms of tissue distribution, expressed in leaf sheaths.

The protein resides in the cytoplasm. Its subcellular location is the cytoskeleton. Tubulin is the major constituent of microtubules, a cylinder consisting of laterally associated linear protofilaments composed of alpha- and beta-tubulin heterodimers. Microtubules grow by the addition of GTP-tubulin dimers to the microtubule end, where a stabilizing cap forms. Below the cap, tubulin dimers are in GDP-bound state, owing to GTPase activity of alpha-tubulin. This chain is Tubulin beta-1 chain (TUBB1), found in Oryza sativa subsp. japonica (Rice).